The following is a 37-amino-acid chain: Large ribosomal subunit protein bL36A (37 aa).

This sequence belongs to the bacterial ribosomal protein bL36 family.

The protein is Large ribosomal subunit protein bL36A of Methylobacillus flagellatus (strain ATCC 51484 / DSM 6875 / VKM B-1610 / KT).